An 897-amino-acid chain; its full sequence is Translation initiation factor IF-2 (897 aa).

Disordered stretches follow at residues 69–88 (RKTK…KEVQ) and 95–304 (RTYV…NAMK). Residues 101–161 (SALEDEQRQA…EEKARIEAQQ (61 aa)) show a composition bias toward basic and acidic residues. The span at 162–179 (KARQAQQPAKAAGSTAQQ) shows a compositional bias: low complexity. 4 stretches are compositionally biased toward basic and acidic residues: residues 180 to 196 (EAEK…KRQQ), 203 to 217 (KAEE…EARV), 226 to 239 (WAEE…ESSD), and 277 to 286 (RREDDRDARN). Over residues 287-296 (PRARKGKRGK) the composition is skewed to basic residues. The tr-type G domain maps to 397-566 (PRAPVVTIMG…LIQSEVLELK (170 aa)). The segment at 406 to 413 (GHVDHGKT) is G1. Position 406-413 (406-413 (GHVDHGKT)) interacts with GTP. Positions 431–435 (GITQH) are G2. A G3 region spans residues 452–455 (DTPG). Residues 452–456 (DTPGH) and 506–509 (NKID) each bind GTP. The segment at 506–509 (NKID) is G4. Residues 542-544 (SAK) form a G5 region.

The protein belongs to the TRAFAC class translation factor GTPase superfamily. Classic translation factor GTPase family. IF-2 subfamily.

The protein resides in the cytoplasm. Functionally, one of the essential components for the initiation of protein synthesis. Protects formylmethionyl-tRNA from spontaneous hydrolysis and promotes its binding to the 30S ribosomal subunits. Also involved in the hydrolysis of GTP during the formation of the 70S ribosomal complex. The polypeptide is Translation initiation factor IF-2 (Aeromonas hydrophila subsp. hydrophila (strain ATCC 7966 / DSM 30187 / BCRC 13018 / CCUG 14551 / JCM 1027 / KCTC 2358 / NCIMB 9240 / NCTC 8049)).